The following is an 859-amino-acid chain: Rod cGMP-specific 3',5'-cyclic phosphodiesterase subunit alpha (859 aa).

Position 2 is an N-acetylglycine (Gly-2). 2 GAF domains span residues 73–222 (QAEK…NLIM) and 254–431 (DIER…GWSV). Positions 483-816 (EEEELAEILQ…KEWKALADEY (334 aa)) constitute a PDEase domain. Residue His-559 is the Proton donor of the active site. 4 residues coordinate a divalent metal cation: His-563, His-599, Asp-600, and Asp-720. The segment at 821–859 (KGLEEEKQKQQAANQAAAGSQHGGKQPGGGPASKSCCVQ) is disordered. The span at 830–840 (QQAANQAAAGS) shows a compositional bias: low complexity. The span at 841–851 (QHGGKQPGGGP) shows a compositional bias: gly residues. Cys-856 bears the Cysteine methyl ester mark. Cys-856 is lipidated: S-farnesyl cysteine. Positions 857-859 (CVQ) are cleaved as a propeptide — removed in mature form.

This sequence belongs to the cyclic nucleotide phosphodiesterase family. In terms of assembly, oligomer composed of two catalytic chains (alpha and beta), an inhibitory chain (gamma) and the delta chain. It depends on a divalent metal cation as a cofactor.

Its subcellular location is the cell membrane. The protein resides in the cell projection. The protein localises to the cilium. It is found in the photoreceptor outer segment. The catalysed reaction is 3',5'-cyclic GMP + H2O = GMP + H(+). Its function is as follows. Rod-specific cGMP phosphodiesterase that catalyzes the hydrolysis of 3',5'-cyclic GMP. This protein participates in processes of transmission and amplification of the visual signal. This chain is Rod cGMP-specific 3',5'-cyclic phosphodiesterase subunit alpha, found in Bos taurus (Bovine).